A 118-amino-acid chain; its full sequence is Sporulation protein YjcA (118 aa).

3 helical membrane-spanning segments follow: residues 8–28, 62–82, and 92–112; these read IVLL…DTIM, FIGE…GFLI, and AQWL…ETLV.

It belongs to the UPF0713 family.

Its subcellular location is the cell membrane. Its function is as follows. Involved in sporulation. The chain is Sporulation protein YjcA (yjcA) from Bacillus subtilis (strain 168).